The following is a 220-amino-acid chain: MDFKKFDTPEYEHKRRKLVEILKDEGIKSQKVLNAILKIPRHMFVPQEYLSLSYENEALPIGYGQTISQPYIVALMTEALNLQGNEKVLEIGTGSGYQTAILAELALEIYTVERIKELLEEAKKRLRVLGYNNVYFKLGDGTLGWEEFAPYDRIIVTAASYDIPEPLKEQLKDGGIMVIPIGGRDFQYLYRITKKGDNFYRENLGGVRFVPLKGEYGWKD.

Serine 68 is an active-site residue.

Belongs to the methyltransferase superfamily. L-isoaspartyl/D-aspartyl protein methyltransferase family.

It localises to the cytoplasm. It catalyses the reaction [protein]-L-isoaspartate + S-adenosyl-L-methionine = [protein]-L-isoaspartate alpha-methyl ester + S-adenosyl-L-homocysteine. Its function is as follows. Catalyzes the methyl esterification of L-isoaspartyl residues in peptides and proteins that result from spontaneous decomposition of normal L-aspartyl and L-asparaginyl residues. It plays a role in the repair and/or degradation of damaged proteins. This is Protein-L-isoaspartate O-methyltransferase from Dictyoglomus thermophilum (strain ATCC 35947 / DSM 3960 / H-6-12).